We begin with the raw amino-acid sequence, 452 residues long: MACRSCVVGFSSLSSCEVTPVGSPRPGTSGWDSCRAPGPGFSSRSLTGCWSAGTISKVTVNPGLLVPLDVKLDPAVQQLKNQEKEEMKALNDKFASLIGKVQALEQRNQLLETRWSFLQGQDSAIFDLGHLYEEYQGRLQEELRKVSQERGQLEANLLQVLEKVEEFRIRYEDEISKRTDMEFTFVQLKKDLDAECLHRTELETKLKSLESFVELMKTIYEQELKDLAAQVKDVSVTVGMDSRCHIDLSGIVEEVKAQYDAVAARSLEEAEAYSRSQLEEQAARSAEYGSSLQSSRSEIADLNVRIQKLRSQILSVKSHCLKLEENIKTAEEQGELAFQDAKTKLAQLEAALQQAKQDMARQLRKYQELMNVKLALDIEIATYRKLVEGEEGRMDSPSATVVSAVQSRCKTAASRSGLSKAPSRKKKGSKGPVIKITEMSEKYFSQESEVSE.

The segment at 1–82 (MACRSCVVGF…DPAVQQLKNQ (82 aa)) is head. Ser-45 carries the phosphoserine modification. A coil 1A region spans residues 82–118 (QEKEEMKALNDKFASLIGKVQALEQRNQLLETRWSFL). The IF rod domain occupies 83 to 394 (EKEEMKALND…KLVEGEEGRM (312 aa)). A linker 1 region spans residues 119-135 (QGQDSAIFDLGHLYEEY). Residues 136-227 (QGRLQEELRK…TIYEQELKDL (92 aa)) form a coil 1B region. The linker 12 stretch occupies residues 228 to 251 (AAQVKDVSVTVGMDSRCHIDLSGI). The segment at 252 to 390 (VEEVKAQYDA…ATYRKLVEGE (139 aa)) is coil 2. Residues 391-452 (EGRMDSPSAT…YFSQESEVSE (62 aa)) are tail. A Phosphoserine modification is found at Ser-396. Residues 412–434 (AASRSGLSKAPSRKKKGSKGPVI) form a disordered region.

The protein belongs to the intermediate filament family. Heterotetramer of two type I and two type II keratins. In terms of tissue distribution, weakly expressed in tongue, but not skin or in any other tissues or organs examined.

This chain is Keratin, type II cytoskeletal 80 (KRT80), found in Homo sapiens (Human).